A 247-amino-acid polypeptide reads, in one-letter code: Probable transcriptional regulatory protein Spro_2779 (247 aa).

This sequence belongs to the TACO1 family.

It localises to the cytoplasm. The polypeptide is Probable transcriptional regulatory protein Spro_2779 (Serratia proteamaculans (strain 568)).